Consider the following 509-residue polypeptide: tRNA (guanine(37)-N(1))-methyltransferase (509 aa).

Residues 1–57 (MVLWILWRPFGFSRRLLKLERHSITESKSLIPLAWTSLTQTLSESPGIFLLGQRKRF) constitute a mitochondrion transit peptide. S-adenosyl-L-methionine is bound by residues His289, 327 to 328 (DL), 355 to 356 (DG), and Asn387. The disordered stretch occupies residues 478 to 509 (TKNPENHEDPPLKRQRTAEAFSDEKTQIASNT).

It belongs to the class I-like SAM-binding methyltransferase superfamily. TRM5/TYW2 family. As to quaternary structure, monomer.

It localises to the mitochondrion matrix. The protein resides in the nucleus. The protein localises to the cytoplasm. It carries out the reaction guanosine(37) in tRNA + S-adenosyl-L-methionine = N(1)-methylguanosine(37) in tRNA + S-adenosyl-L-homocysteine + H(+). Involved in mitochondrial tRNA methylation. Specifically methylates the N1 position of guanosine-37 in various tRNAs. Methylation is not dependent on the nature of the nucleoside 5' of the target nucleoside. This is the first step in the biosynthesis of wybutosine (yW), a modified base adjacent to the anticodon of tRNAs and required for accurate decoding. In Macaca fascicularis (Crab-eating macaque), this protein is tRNA (guanine(37)-N(1))-methyltransferase.